A 350-amino-acid polypeptide reads, in one-letter code: Arginine N-succinyltransferase (350 aa).

Leu125 is a binding site for succinyl-CoA. The active-site Proton donor is the His229.

The protein belongs to the arginine N-succinyltransferase family.

It catalyses the reaction succinyl-CoA + L-arginine = N(2)-succinyl-L-arginine + CoA + H(+). It functions in the pathway amino-acid degradation; L-arginine degradation via AST pathway; L-glutamate and succinate from L-arginine: step 1/5. Its function is as follows. Catalyzes the transfer of succinyl-CoA to arginine to produce N(2)-succinylarginine. The sequence is that of Arginine N-succinyltransferase from Yersinia pseudotuberculosis serotype IB (strain PB1/+).